Consider the following 396-residue polypeptide: MIISAASDYRAAAQRTLPPFLFHYIDGGAYAEYTLRRNVEDLSQVALRQRVLKNMSDLSLETTLFNETLSMPVALAPVGLCGMYARRGEVQAAAAADAKGIPFTLSTVSVCPIEEVAPTIKRPMWFQLYVLRDRGFMRNALERAKAAGCSTLVFTVDMPTPGARYRDAHSGMSGPNAAMRRYWQAVMHPKWAWDVGLNGRPHDLGNISAYLGKPTGLEDYIGWLANNFDPSISWKDLEWIREFWDGPMVIKGILDPEDARDAVRFGADGIVVSNHGGRQLDGVLSSARALPAIADAVKGDIAILADSGIRNGLDVVRMIALGADTVLLGRAYLYALATAGKAGVANLLDLIEKEMKVAMTLTGAKTISEISGDSLVQELGKSLPAALAPMSKGDTA.

Residues methionine 1–glycine 380 form the FMN hydroxy acid dehydrogenase domain. A substrate-binding site is contributed by tyrosine 24. FMN contacts are provided by serine 106 and glutamine 127. Tyrosine 129 contributes to the substrate binding site. Threonine 155 serves as a coordination point for FMN. Arginine 164 provides a ligand contact to substrate. Lysine 251 serves as a coordination point for FMN. The Proton acceptor role is filled by histidine 275. Arginine 278 contributes to the substrate binding site. FMN is bound at residue aspartate 306–arginine 330.

Belongs to the FMN-dependent alpha-hydroxy acid dehydrogenase family. Requires FMN as cofactor.

The protein resides in the cell inner membrane. It carries out the reaction (S)-lactate + A = pyruvate + AH2. In terms of biological role, catalyzes the conversion of L-lactate to pyruvate. Is coupled to the respiratory chain. The protein is L-lactate dehydrogenase of Salmonella enteritidis PT4 (strain P125109).